The following is a 344-amino-acid chain: Sulfate/thiosulfate import ATP-binding protein CysA (344 aa).

Positions 3–237 (IEVRNLVKKF…PATAFVHGFI (235 aa)) constitute an ABC transporter domain. 35–42 (GPSGSGKT) lines the ATP pocket.

It belongs to the ABC transporter superfamily. Sulfate/tungstate importer (TC 3.A.1.6) family. The complex is composed of two ATP-binding proteins (CysA), two transmembrane proteins (CysT and CysW) and a solute-binding protein (CysP).

The protein localises to the cell inner membrane. It catalyses the reaction sulfate(out) + ATP + H2O = sulfate(in) + ADP + phosphate + H(+). It carries out the reaction thiosulfate(out) + ATP + H2O = thiosulfate(in) + ADP + phosphate + H(+). Part of the ABC transporter complex CysAWTP involved in sulfate/thiosulfate import. Responsible for energy coupling to the transport system. The protein is Sulfate/thiosulfate import ATP-binding protein CysA of Bradyrhizobium diazoefficiens (strain JCM 10833 / BCRC 13528 / IAM 13628 / NBRC 14792 / USDA 110).